Reading from the N-terminus, the 147-residue chain is Large ribosomal subunit protein uL13 (147 aa).

This sequence belongs to the universal ribosomal protein uL13 family. Part of the 50S ribosomal subunit.

Functionally, this protein is one of the early assembly proteins of the 50S ribosomal subunit, although it is not seen to bind rRNA by itself. It is important during the early stages of 50S assembly. This Arthrobacter sp. (strain FB24) protein is Large ribosomal subunit protein uL13.